Here is a 74-residue protein sequence, read N- to C-terminus: Sec-independent protein translocase protein TatA (74 aa).

Residues 1-21 (MGGISIWQLLIIVAIIVLLFG) form a helical membrane-spanning segment. A disordered region spans residues 51-74 (ANFDKVEAKESTSTTEKTKEKEQA).

Belongs to the TatA/E family. In terms of assembly, the Tat system comprises two distinct complexes: a TatABC complex, containing multiple copies of TatA, TatB and TatC subunits, and a separate TatA complex, containing only TatA subunits. Substrates initially bind to the TatABC complex, which probably triggers association of the separate TatA complex to form the active translocon.

It localises to the cell inner membrane. Part of the twin-arginine translocation (Tat) system that transports large folded proteins containing a characteristic twin-arginine motif in their signal peptide across membranes. TatA could form the protein-conducting channel of the Tat system. The sequence is that of Sec-independent protein translocase protein TatA from Haemophilus ducreyi (strain 35000HP / ATCC 700724).